A 276-amino-acid polypeptide reads, in one-letter code: DnaJ homolog subfamily C member 27-B (276 aa).

Residues 23–30, 71–75, and 137–140 each bind GTP; these read GNAEVGKS, DMAGH, and NKID. The region spanning 220 to 276 is the J domain; it reads DSWDMLGVKPGATRDEVNKAYRKLAVLLHPDKCVAPGSEDAFKAVVNARTALLKNIK.

The protein belongs to the small GTPase superfamily. Rab family.

Its subcellular location is the nucleus. GTPase possibly involved in regulation of the MEK/ERK pathway. This Xenopus laevis (African clawed frog) protein is DnaJ homolog subfamily C member 27-B (dnajc27-b).